The primary structure comprises 277 residues: 4-hydroxy-tetrahydrodipicolinate reductase (277 aa).

NAD(+)-binding positions include 11-16 (GALGRM) and 110-112 (GTT). His166 serves as the catalytic Proton donor/acceptor. His167 lines the (S)-2,3,4,5-tetrahydrodipicolinate pocket. The active-site Proton donor is Lys170. Position 176–177 (176–177 (GT)) interacts with (S)-2,3,4,5-tetrahydrodipicolinate.

It belongs to the DapB family.

Its subcellular location is the cytoplasm. It carries out the reaction (S)-2,3,4,5-tetrahydrodipicolinate + NAD(+) + H2O = (2S,4S)-4-hydroxy-2,3,4,5-tetrahydrodipicolinate + NADH + H(+). The enzyme catalyses (S)-2,3,4,5-tetrahydrodipicolinate + NADP(+) + H2O = (2S,4S)-4-hydroxy-2,3,4,5-tetrahydrodipicolinate + NADPH + H(+). Its pathway is amino-acid biosynthesis; L-lysine biosynthesis via DAP pathway; (S)-tetrahydrodipicolinate from L-aspartate: step 4/4. Its function is as follows. Catalyzes the conversion of 4-hydroxy-tetrahydrodipicolinate (HTPA) to tetrahydrodipicolinate. The chain is 4-hydroxy-tetrahydrodipicolinate reductase from Synechococcus sp. (strain CC9605).